Reading from the N-terminus, the 1707-residue chain is Latrophilin Cirl (1707 aa).

Residues 1 to 767 (MLPTILSISY…LFTMFDGNMR (767 aa)) are Extracellular-facing. The SUEL-type lectin domain occupies 25-114 (ACEGKKLTIE…KYLEAHYQCI (90 aa)). Asn-142 is a glycosylation site (N-linked (GlcNAc...) asparagine). A disordered region spans residues 176-301 (GLFNVPPQHT…TAASGAVVPG (126 aa)). 2 stretches are compositionally biased toward polar residues: residues 185-198 (TAVTHSTPSSSTTA) and 256-265 (NATSPSNTRI). Asn-256 carries N-linked (GlcNAc...) asparagine glycosylation. Over residues 275–285 (DDGTLLTTKSS) the composition is skewed to low complexity. N-linked (GlcNAc...) asparagine glycans are attached at residues Asn-302, Asn-341, Asn-398, Asn-655, Asn-703, and Asn-730. The segment at 376–400 (YDEYDDDPSSTTPAPNGGDCLHNSS) is disordered. The GAIN-B domain occupies 561 to 754 (RSVVQKVKNI…AILMDVVDEH (194 aa)). Cystine bridges form between Cys-709/Cys-736 and Cys-724/Cys-738. A GPS region spans residues 709–754 (CVFWNYIDHAWSANGCSLESTNRTHSVCSCNHLTNFAILMDVVDEH). A helical membrane pass occupies residues 768-788 (IFIYISIGICVVFIVIALLTL). Over 789–801 (KLFNGVFVKSART) the chain is Cytoplasmic. The helical transmembrane segment at 802 to 822 (SIYTSIYLCLLAIELLFLLGI) threads the bilayer. Residues 823–828 (EQTETS) lie on the Extracellular side of the membrane. The chain crosses the membrane as a helical span at residues 829–849 (IFCGFITIFLHCAILSGTAWF). Topologically, residues 850–875 (CYEAFHSYSTLTSDELLLEVDQTPKV) are cytoplasmic. A helical membrane pass occupies residues 876–896 (NCYYLLSYGLSLSVVAISLVI). The Extracellular segment spans residues 897–920 (DPSTYTQNDYCVLMEANALFYATF). Residues 921-941 (VIPVLVFFVAAIGYTFLSWII) form a helical membrane-spanning segment. At 942–968 (LCRKSRTGLKTKEHTRLASVRFDIRCS) the chain is on the cytoplasmic side. Residues 969-989 (FVFLLLLSAVWCSSYFYLRGA) traverse the membrane as a helical segment. Residues 990–999 (KMDDDTADVY) lie on the Extracellular side of the membrane. A helical transmembrane segment spans residues 1000–1020 (GYCFICFNTLLGLYIFVFHCI). At 1021 to 1707 (QNEKIRREYR…VRCYLEPLAK (687 aa)) the chain is on the cytoplasmic side. A Phosphoserine modification is found at Ser-1156. Disordered regions lie at residues 1169-1188 (AHKQQQQQQQQQQGPLGEGY) and 1236-1260 (KPNSGQHGKKKRGAGGVPASPSGSL). A compositionally biased stretch (low complexity) spans 1172–1181 (QQQQQQQQQQ). Phosphoserine occurs at positions 1255 and 1262. Residues 1316–1326 (QQLHQQQQQQL) show a composition bias toward low complexity. 4 disordered regions span residues 1316–1335 (QQLHQQQQQQLSSDEEQVEQ), 1450–1538 (GGGS…SDER), 1563–1582 (APLDYGALPPGSGPQPEHNG), and 1612–1687 (GGRL…QQRH). Phosphoserine occurs at positions 1327 and 1328. Low complexity predominate over residues 1456–1481 (GGSVSSRSQQQQLKKQQQQQSLAQQR). Composition is skewed to acidic residues over residues 1489–1503 (DDDDDEEEEEDEEAT) and 1513–1526 (CDEDEEEDESDLED). The span at 1635–1650 (QTPAQKRQQLQKLSPQ) shows a compositional bias: polar residues. A compositionally biased stretch (low complexity) spans 1651-1673 (STTSSSSHTSHSNPNPHPLQLTH). Over residues 1674-1686 (PHPHQHPPHHQQR) the composition is skewed to basic residues.

This sequence belongs to the G-protein coupled receptor 2 family. LN-TM7 subfamily. In terms of assembly, forms a heterodimer, consisting of a large extracellular region non-covalently linked to a seven-transmembrane moiety. Post-translationally, proteolytically cleaved into 2 subunits, an extracellular subunit and a seven-transmembrane subunit.

The protein resides in the cell membrane. This Drosophila yakuba (Fruit fly) protein is Latrophilin Cirl.